The sequence spans 210 residues: N-(5'-phosphoribosyl)anthranilate isomerase (210 aa).

The protein belongs to the TrpF family.

It catalyses the reaction N-(5-phospho-beta-D-ribosyl)anthranilate = 1-(2-carboxyphenylamino)-1-deoxy-D-ribulose 5-phosphate. The protein operates within amino-acid biosynthesis; L-tryptophan biosynthesis; L-tryptophan from chorismate: step 3/5. In Staphylococcus aureus (strain Mu3 / ATCC 700698), this protein is N-(5'-phosphoribosyl)anthranilate isomerase.